We begin with the raw amino-acid sequence, 697 residues long: Choline transporter-like protein 2 (697 aa).

The Cytoplasmic segment spans residues 1-30 (MDMEEKPKYGEPRKFDPSFKGPIQNRGCTD). A helical transmembrane segment spans residues 31–51 (IVCCIIFIIAILGYLAVGILA). Topologically, residues 52-226 (WTHGDPRKVI…KIFEDYTKSW (175 aa)) are extracellular. Residues N113 and N204 are each glycosylated (N-linked (GlcNAc...) asparagine). Residues 227–247 (YWILICLLIAVVLSLIFIVLL) traverse the membrane as a helical segment. Residues 248–249 (RF) are Cytoplasmic-facing. Residues 250 to 270 (LAGVMVWVMILMVVAVIAYGI) form a helical membrane-spanning segment. Residues 271 to 309 (AHCSIKYVSLKDTPGSNITLQQLGFQPDFAVYLHIRQTW) are Extracellular-facing. N-linked (GlcNAc...) asparagine glycosylation is present at N287. Residues 310-330 (LAFIIILAILELIIILLLIFL) traverse the membrane as a helical segment. Topologically, residues 331–353 (RNRIRVAVELMKEASRAIGYVMS) are cytoplasmic. Residues 354-374 (SLVFPIFTFFLLAIVIAFWGV) form a helical membrane-spanning segment. The Extracellular portion of the chain corresponds to 375-435 (NAVFLSTSSE…YGGETPYHKY (61 aa)). N-linked (GlcNAc...) asparagine glycans are attached at residues N391 and N406. A helical transmembrane segment spans residues 436-456 (LILLQFYNVFLFFWCANFVTA). Over 457-498 (LGQMTLAGAFASYYWAFDKSKDMPAFPLCASLGRSLRYHTGS) the chain is Cytoplasmic. The helical transmembrane segment at 499-519 (LAFGSLLLAIVQVIRVLLEYI) threads the bilayer. Over 520-593 (DHKLKGAENK…RVVVLDKVTD (74 aa)) the chain is Extracellular. Residues 594-614 (FILFLGKLLIVGLVGIFAFFF) form a helical membrane-spanning segment. Over 615-632 (FSGQTDAFKGTAPSLHYY) the chain is Cytoplasmic. The chain crosses the membrane as a helical span at residues 633-653 (WVPILTVLVCSYLIAHGFFSV). The Extracellular segment spans residues 654–697 (YAMCVDTLFLCFLEDLERNDGSAERPYLMSENLLNVLKKKNQAN).

This sequence belongs to the CTL (choline transporter-like) family.

Its subcellular location is the cell membrane. The protein resides in the mitochondrion outer membrane. It carries out the reaction choline(out) + n H(+)(in) = choline(in) + n H(+)(out). The enzyme catalyses ethanolamine(out) + n H(+)(in) = ethanolamine(in) + n H(+)(out). Its function is as follows. Choline/H+ antiporter, mainly in mitochodria. Also acts as a low-affinity ethanolamine/H+ antiporter, regulating the supply of extracellular ethanolamine (Etn) for the CDP-Etn pathway, redistribute intracellular Etn and balance the CDP-Cho and CDP-Etn arms of the Kennedy pathway. The protein is Choline transporter-like protein 2 (slc44a2) of Danio rerio (Zebrafish).